The following is a 379-amino-acid chain: Cytochrome b (379 aa).

4 helical membrane passes run 33 to 53, 77 to 98, 113 to 133, and 178 to 198; these read FGSL…FLAM, WLIR…FIHV, WNIG…GYVL, and FFAF…VHLL. Heme b is bound by residues H83 and H97. Positions 182 and 196 each coordinate heme b. Position 201 (H201) interacts with a ubiquinone. Transmembrane regions (helical) follow at residues 226-246, 288-308, 320-340, and 347-367; these read TKDL…ALFF, LGGV…PLLN, ITQV…WIGG, and XTMI…ILIP.

It belongs to the cytochrome b family. The cytochrome bc1 complex contains 11 subunits: 3 respiratory subunits (MT-CYB, CYC1 and UQCRFS1), 2 core proteins (UQCRC1 and UQCRC2) and 6 low-molecular weight proteins (UQCRH/QCR6, UQCRB/QCR7, UQCRQ/QCR8, UQCR10/QCR9, UQCR11/QCR10 and a cleavage product of UQCRFS1). This cytochrome bc1 complex then forms a dimer. It depends on heme b as a cofactor.

The protein localises to the mitochondrion inner membrane. Component of the ubiquinol-cytochrome c reductase complex (complex III or cytochrome b-c1 complex) that is part of the mitochondrial respiratory chain. The b-c1 complex mediates electron transfer from ubiquinol to cytochrome c. Contributes to the generation of a proton gradient across the mitochondrial membrane that is then used for ATP synthesis. The polypeptide is Cytochrome b (MT-CYB) (Akodon boliviensis (Bolivian grass mouse)).